A 567-amino-acid polypeptide reads, in one-letter code: Frizzled-7 (567 aa).

The signal sequence occupies residues 1–31 (MRPAAGEAGAGLRWLGLAALLAALLGTPCAA). The Extracellular segment spans residues 32 to 250 (AHHEDKAISV…EAEVRFARLW (219 aa)). An FZ domain is found at 42-161 (PDHGFCQPIS…HGAGEICVGQ (120 aa)). Intrachain disulfides connect C47–C108, C55–C101, C92–C129, C118–C158, and C122–C146. N-linked (GlcNAc...) asparagine glycosylation is present at N61. N162 carries N-linked (GlcNAc...) asparagine glycosylation. Residues 251–271 (VGVWSVLCCASTLFTVLTYLV) traverse the membrane as a helical segment. Residues 272–282 (DMRRFSYPERP) lie on the Cytoplasmic side of the membrane. The chain crosses the membrane as a helical span at residues 283–303 (IIFLSGCYFMVAVAYAAGFLL). The Extracellular segment spans residues 304 to 330 (EERVVCLERFSEDGYRTVAQGTKKEGC). Residues 331–351 (TILFMILYFFGMASSIWWVIL) form a helical membrane-spanning segment. Topologically, residues 352–373 (SLTWFLAAGMKWGHEAIEANSQ) are cytoplasmic. The chain crosses the membrane as a helical span at residues 374 to 394 (YFHLAAWAVPAVKTITILAMG). Topologically, residues 395-417 (QVDGDVLSGVCYVGIYSVDSLRG) are extracellular. The chain crosses the membrane as a helical span at residues 418–438 (FVLAPLFVYLFIGTSFLLAGF). Residues 439-464 (VSLFRIRTIMKHDGTKTEKLEKLMVR) are Cytoplasmic-facing. The helical transmembrane segment at 465-485 (IGVFSVLYTVPATIVVACYFY) threads the bilayer. Residues 486-521 (EQAFRSTWEKTWLLQTCKTYAVPCPSHFAPMSPDFT) lie on the Extracellular side of the membrane. A helical transmembrane segment spans residues 522–542 (VFMIKYLMTMIVGITTGFWIW). Topologically, residues 543-567 (SGKTLQSWRRFYHRLSTGSKGETAV) are cytoplasmic. The Lys-Thr-X-X-X-Trp motif, mediates interaction with the PDZ domain of Dvl family members motif lies at 545–550 (KTLQSW). The PDZ-binding signature appears at 565-567 (TAV).

It belongs to the G-protein coupled receptor Fz/Smo family. Expressed broadly in cranial ectoderm. Also expressed in the developing somites and in other cranial placodes, including the olfactory, lens, otic placodes (lateral half of the vesicle) and epibranchial placodes. Low level of expression in all the mesoderm derivatives in the limb buds.

It is found in the cell membrane. It localises to the endosome membrane. Functionally, receptor for Wnt proteins. Most of frizzled receptors are coupled to the beta-catenin canonical signaling pathway, which leads to the activation of disheveled proteins, inhibition of GSK-3 kinase, nuclear accumulation of beta-catenin and activation of Wnt target genes. A second signaling pathway involving PKC and calcium fluxes has been seen for some family members, but it is not yet clear if it represents a distinct pathway or if it can be integrated in the canonical pathway, as PKC seems to be required for Wnt-mediated inactivation of GSK-3 kinase. Both pathways seem to involve interactions with G-proteins. May be involved in transduction and intercellular transmission of polarity information during tissue morphogenesis and/or in differentiated tissues. The chain is Frizzled-7 (FZD7) from Gallus gallus (Chicken).